Here is a 37-residue protein sequence, read N- to C-terminus: MKVRASVKKICKDCKIIRRKGVIRVICITKRHNQRQG.

The protein belongs to the bacterial ribosomal protein bL36 family.

This is Large ribosomal subunit protein bL36 from Desulforapulum autotrophicum (strain ATCC 43914 / DSM 3382 / VKM B-1955 / HRM2) (Desulfobacterium autotrophicum).